Here is a 546-residue protein sequence, read N- to C-terminus: Histidine--tRNA ligase, mitochondrial (546 aa).

The transit peptide at 1 to 20 (MLSRSLNKVVTSIKSSSIIR) directs the protein to the mitochondrion. L-histidine-binding positions include 129 to 131 (DLT), Arg156, Gln172, Asp176, Arg326, and 330 to 331 (YY).

This sequence belongs to the class-II aminoacyl-tRNA synthetase family.

The protein resides in the cytoplasm. The protein localises to the mitochondrion. It carries out the reaction tRNA(His) + L-histidine + ATP = L-histidyl-tRNA(His) + AMP + diphosphate + H(+). Functionally, catalyzes the aminoacylation of histidyl-tRNA in both the cytoplasm and the mitochondrion. The sequence is that of Histidine--tRNA ligase, mitochondrial (HTS1) from Saccharomyces cerevisiae (strain ATCC 204508 / S288c) (Baker's yeast).